Reading from the N-terminus, the 1960-residue chain is MILSYSRNLYPQSTGEKIVMGIDWSPNSQKLGVLTADHSLYLFNDQGERQDKIGLRSTEVKSSNKDFIPLCGTFSPCSTLFVVGQSDKVAYIFRLGQLWTDKKSIVARIPMDDAVTAVSWPLSEATSELSPIIFGTASGNLYLYSFQSKSIQAFVSSACFASLASSKTTTADNQATPLSPMSSPIIKILPIPSMPQCFVAVAESGLAVYVDIKTQQLRAAARHSKAVTTACMIAQKTSHGRHYLVLADVMCKVTVYAVETSAALCVCNIKTPQNIPFTASTASPSGGGCIVANASGLHFLTLVNSQPVTVSYEASSSAVTVYQDSGKGFLPQITSIAWRPDVSVLTVGTSLGSVDNFTPTIGSYRYCGAEVVNSAPNRATINIPRFNGSKRFAAGSIDLHASMSSELRTVKAFPKHDFTSFVQNPSGYKSTNIYLLGIGDSSIVIYSLNDDTINEFRYNASLTDKFFFDVGACRTMVISNTLGEFTVCYLTTQSDPGCTFYKVDIYATMRGCVAPHASVISCYPIYEDAAGSLNRISKIRTVCLGEERTDVLVTDLMPPDMCDDFSDPIVVLFRTKTSRAVDWLFFGPSGNAVLLRDISGGVSILNITDYSITQLSTSVGNGVVQWADPFDVIVGQESPDAPLYVWYNPTDIEDAPEILQPPVPVDNESWSFSYVKSNPNNFSKITAGHVKNISVQAIMTTPSGRQTSVSLDTNLLLFNLLLDKHDILGACQLLSALQDNNARVTNRNLWQKLCSVALDSFNFIVASRCYAALGDLPLSITAREIHERVQNAKDGEAGMTHDRMNLYCQAQIALLNSDLDKYDGLMMSCGRIDEVLTLYKELNLYSRAEKICPESMINTLRTEAIQWLINSGQMTTAGMLLAQRGDVRGALDLLIQDRSYLSAFELAKRAMTSSADPSLAPIIELLIGKLEDSHHYSQAAVLCTLGSGRNHERALALFRKSHAFDEALELARQHLPHECLPIEREWAEWLFQTGQYDKATQHYLECMNQEMAVESAFRANNFKLVESLLMDIPAAETNAHLCFRLAEMKYISGDAAGAATWLLKADQPLLGLSAFICAGKFDEAIQFIRSNLPRQSYRELLVHEAKRIISLGSAPSNNPVQEKTKTLTSSGVFASSSGESSEKQNVQSFLNRMESLSHIRGVYSAIELLKLAGLYEDVADILQGNSMWDELYSFAKEHAASFSNYPDILRMVADAKRVKGDKKSCATILEELCMELYGLSGSSSGSSGGMGAATDGYTRLRTQASHLIQARRDVLLEASSMYCDLFMYLEAIRLCKRCGDMDALTDVCLLWVSSNANRSLLIQQLKQLNIIEPTLTKAADRGMWDVCTELSEYCPDPEAVRCDLFWRRGRKLEIEGRLKEAEEFYAKAGKHQEIVGMYLDTGKFEDAQQAAMEMTSNFERERAMRSIRESKARVLASEGKWREAEAEFIELGLVEDIISIYRSNQMWQDALRVAKEHGDSVLVENLSESYVKHDKLRSGLGTSASAFEPGAKADLGDGSGLAGRTKQHGSDVQTARSILEAGSSAGLRKMLMSAARSGSDVLFEVVLHRCAELASMVLNNDIQDSSIVEDIAIISPSIHNFEEIGSPHERVMSLAVAYLSKGVPLSVTTGTESKGTISLIISDVCNREQLLLVCRGVLSLAFVESEYVNRITKQETHGDGIFCRLRSILLSYRNMLLNTVRGTKAAETDKVNFIPGDQELSRCFEATHLIIQLAKLFIGAKTISSMRDIVLVSSSLVRYCDLLPVDRCFVVAGESCKQFVEISNGNSNAKVMEARTQYLNQCCVFLNKFIDLHEEISNHSRNLERIDISDLTGSGIPWTAQVPVNLYLSKSRADEVRAFILELTMDESTTTTQELPREPCPFGCGKPIWIGACSCINCRQVSPICAVTGCHVINPNTHMLPSSRACQICGCYARPAPWNSLITKSKNCPVCEEVGFPIGK.

WD repeat units follow at residues 63-103 (SNKD…TDKK) and 328-367 (GFLP…YRYC). TPR repeat units follow at residues 1064 to 1098 (KADQ…QSYR), 1362 to 1395 (CDLF…QEIV), and 1397 to 1428 (MYLD…RSIR).

Belongs to the IFT172 family.

The protein resides in the cell projection. The protein localises to the cilium. Its subcellular location is the flagellum. It is found in the cytoplasm. It localises to the cytoskeleton. The protein resides in the flagellum axoneme. The protein localises to the flagellum basal body. Component of the intraflagellar transport complex B (IFT-B) involved in flagellar assembly. In Giardia intestinalis (strain ATCC 50803 / WB clone C6) (Giardia lamblia), this protein is Intraflagellar transport protein 172.